Consider the following 417-residue polypeptide: UPF0754 membrane protein PCC8801_0398 (417 aa).

2 helical membrane-spanning segments follow: residues F11–T31 and I395–I415.

This sequence belongs to the UPF0754 family.

It localises to the cell inner membrane. This chain is UPF0754 membrane protein PCC8801_0398, found in Rippkaea orientalis (strain PCC 8801 / RF-1) (Cyanothece sp. (strain PCC 8801)).